Here is a 263-residue protein sequence, read N- to C-terminus: Endonuclease NucS (263 aa).

It belongs to the NucS endonuclease family.

The protein resides in the cytoplasm. In terms of biological role, cleaves both 3' and 5' ssDNA extremities of branched DNA structures. The sequence is that of Endonuclease NucS from Methanocaldococcus jannaschii (strain ATCC 43067 / DSM 2661 / JAL-1 / JCM 10045 / NBRC 100440) (Methanococcus jannaschii).